A 128-amino-acid polypeptide reads, in one-letter code: Ribonuclease P protein component (128 aa).

It belongs to the RnpA family. As to quaternary structure, consists of a catalytic RNA component (M1 or rnpB) and a protein subunit.

It carries out the reaction Endonucleolytic cleavage of RNA, removing 5'-extranucleotides from tRNA precursor.. Its function is as follows. RNaseP catalyzes the removal of the 5'-leader sequence from pre-tRNA to produce the mature 5'-terminus. It can also cleave other RNA substrates such as 4.5S RNA. The protein component plays an auxiliary but essential role in vivo by binding to the 5'-leader sequence and broadening the substrate specificity of the ribozyme. The polypeptide is Ribonuclease P protein component (Mycoplasma genitalium (strain ATCC 33530 / DSM 19775 / NCTC 10195 / G37) (Mycoplasmoides genitalium)).